Consider the following 126-residue polypeptide: Profilin-2 (126 aa).

Position 2 is a blocked amino end (Ser) (Ser-2). Lys-104 is subject to N6,N6,N6-trimethyllysine.

This sequence belongs to the profilin family. As to quaternary structure, occurs in many kinds of cells as a complex with monomeric actin in a 1:1 ratio.

The protein resides in the cytoplasm. It localises to the cytoskeleton. Functionally, binds to actin and affects the structure of the cytoskeleton. At high concentrations, profilin prevents the polymerization of actin, whereas it enhances it at low concentrations. By binding to PIP2, it inhibits the formation of IP3 and DG. The protein is Profilin-2 of Acanthamoeba castellanii (Amoeba).